A 220-amino-acid polypeptide reads, in one-letter code: Botcinic acid biosynthesis cluster B protein 12 (220 aa).

Its pathway is polyketide biosynthesis. Functionally, part of the gene cluster B that mediates the biosynthesis of botcinic acid and its botcinin derivatives, acetate-derived polyketides that contribute to virulence when combined with the sesquiterpene botrydial. Botcinic acid and its derivatives have been shown to induce chlorosis and necrosis during host plant infection, but also have antifungal activities. Two polyketide synthases, BOA6 and BOA9, are involved in the biosynthesis of botcinins. BOA6 mediates the formation of the per-methylated tetraketide core by condensation of four units of malonyl-CoA with one unit of acetyl-CoA, which would be methylated in activated methylene groups to yield a bicyclic acid intermediate that could then either be converted to botrylactone derivatives or lose the starter acetate unit through a retro-Claisen type C-C bond cleavage to yield botcinin derivatives. The second polyketide synthase, BOA9, is probably required for the biosynthesis of the tetraketide side chain of botcinins. The methyltransferase (MT) domain within BOA6 is probably responsible for the incorporation of four methyl groups. The trans-enoyl reductase BOA5 might take over the enoyl reductase function of BOA6 that misses an ER domain. The monooxygenases BOA2, BOA3 and BOA4 might be involved in further hydroxylations at C4, C5 and C8, whereas BOA7, close to BOA9, could potentially be involved in the hydroxylation at C4 in the side chain of botcinins. The sequence is that of Botcinic acid biosynthesis cluster B protein 12 from Botryotinia fuckeliana (strain B05.10) (Noble rot fungus).